The primary structure comprises 483 residues: Probable ATP-dependent RNA helicase DDX49 (483 aa).

The Q motif signature appears at 2-30 (AGFAELGLSSWLVEQCRQLGLKQPTPVQL). Residues 33–207 (IPAILEGRDC…GLATNQPFFW (175 aa)) enclose the Helicase ATP-binding domain. Residue 46–53 (AKTGSGKT) participates in ATP binding. Positions 152–155 (DEAD) match the DEAD box motif. The 165-residue stretch at 218 to 382 (QLDQRYLLVP…EFSVEEAEVL (165 aa)) folds into the Helicase C-terminal domain. Residues 444–483 (KEKVEETLKRQKAGRAGHKGRPPRTPSGSHSGPVPSQGLV) form a disordered region. The span at 453–465 (RQKAGRAGHKGRP) shows a compositional bias: basic residues.

This sequence belongs to the DEAD box helicase family. DDX49/DBP8 subfamily.

It localises to the nucleus. Its subcellular location is the nucleolus. It carries out the reaction ATP + H2O = ADP + phosphate + H(+). Functionally, ATP-dependent RNA helicase that plays a role in various aspects of RNA metabolism including the regulation of mRNA export and the levels of pre-ribosomal RNA. Regulates the stability and synthesis of pre-ribosomal RNA and thereby regulates cell proliferation. Also possesses antiviral activity by recognizing gammaherpesvirus transcripts in the context of lytic reactivation. In Homo sapiens (Human), this protein is Probable ATP-dependent RNA helicase DDX49 (DDX49).